The following is a 155-amino-acid chain: RNA pyrophosphohydrolase (155 aa).

The Nudix hydrolase domain maps to 5–147; that stretch reads KYRPNVAAII…KRQVYRQVIA (143 aa). The Nudix box signature appears at 42–63; that stretch reads GGIDEGETPLEALHRELLEEIG.

Belongs to the Nudix hydrolase family. RppH subfamily. Requires a divalent metal cation as cofactor.

Its function is as follows. Accelerates the degradation of transcripts by removing pyrophosphate from the 5'-end of triphosphorylated RNA, leading to a more labile monophosphorylated state that can stimulate subsequent ribonuclease cleavage. The protein is RNA pyrophosphohydrolase of Helicobacter pylori (strain G27).